Here is a 387-residue protein sequence, read N- to C-terminus: Limonene 1,2-monooxygenase (387 aa).

Belongs to the bacterial luciferase oxidoreductase family. It depends on FAD as a cofactor.

The enzyme catalyses (4S)-limonene + NADPH + O2 + H(+) = limonene 1,2-epoxide + NADP(+) + H2O. It catalyses the reaction (4S)-limonene + NADH + O2 + H(+) = limonene 1,2-epoxide + NAD(+) + H2O. It carries out the reaction (4R)-limonene + NADH + O2 + H(+) = limonene 1,2-epoxide + NAD(+) + H2O. The catalysed reaction is (4R)-limonene + NADPH + O2 + H(+) = limonene 1,2-epoxide + NADP(+) + H2O. It participates in terpene metabolism; (4R)-limonene degradation; (1S,4R)-1-hydroxylimonen-2-one from (4R)-limonene: step 1/3. Functionally, acts on both enantiomers of limonene by their NAD-dependent epoxidation at the 1,2 double bond forming limonene-1,2-epoxide. This chain is Limonene 1,2-monooxygenase (limB), found in Rhodococcus erythropolis (Arthrobacter picolinophilus).